The following is a 661-amino-acid chain: Immunoglobulin-like domain-containing receptor 2 (661 aa).

Positions 1 to 35 are cleaved as a signal peptide; that stretch reads MPAFPTLDLDGKLGKMDRVVLGWTAVFWLTAMVEG. The Ig-like V-type domain maps to 36–177; sequence LQVTVPDKKK…LEGKNEDSVE (142 aa). At 36–201 the chain is on the lumenal side; it reads LQVTVPDKKK…PSFAVEIMPE (166 aa). Cys57 and Cys160 form a disulfide bridge. A helical membrane pass occupies residues 202–222; the sequence is WVFVGLVILGIFLFFVLVGIC. The Cytoplasmic portion of the chain corresponds to 223–661; sequence WCQCCPHSCC…DFPTRMSLVV (439 aa). 3 disordered regions span residues 288–310, 410–429, and 453–661; these read LMDKPHPPPLAPSDSTGGSHSVR, EDRESFRHSQQRSKSEMLSR, and QRSR…SLVV. 2 stretches are compositionally biased toward basic and acidic residues: residues 410–428 and 463–478; these read EDRESFRHSQQRSKSEMLS and HEARAGSRFERSESRA. Ser487 bears the Phosphoserine mark. Positions 491–506 are enriched in basic and acidic residues; the sequence is YYGRGRSREPPGDGER. Omega-N-methylarginine is present on Arg559. At Ser594 the chain carries Phosphoserine. Acidic residues predominate over residues 595-607; it reads EGEDEDDAADEDA. Over residues 628–639 the composition is skewed to basic and acidic residues; that stretch reads RGRDLSFHSNSE.

The protein belongs to the immunoglobulin superfamily. LISCH7 family. In terms of assembly, interacts with MARVELD2 and OCLN. Interacts with P4HB and HSPA5; the interaction with HSPA5 stabilizes ILDR2 expression. Interacts (via C-terminus) with TRA2A, TRA2B and SRSF1. In terms of tissue distribution, expressed in epithelial tissues, mainly in liver, kidney and colon.

It is found in the endoplasmic reticulum membrane. It localises to the cell junction. The protein resides in the tight junction. Its subcellular location is the nucleus. Its function is as follows. May be involved in ER stress pathways with effects on lipid homeostasis and insulin secretion. With ILDR1 and LSR, involved in the maintain of the epithelial barrier function through the recruitment of MARVELD2/tricellulin to tricellular tight junctions. Also functions as a B7-like protein family member expressed on immune cells and inflamed tissue and with T-cell inhibitory activity. In the inner ear, may regulate alternative pre-mRNA splicing via binding to TRA2A, TRA2B and SRSF1. This chain is Immunoglobulin-like domain-containing receptor 2, found in Mus musculus (Mouse).